A 454-amino-acid polypeptide reads, in one-letter code: MNPVITIVGRPNVGKSTLFNRLTRSRDALVADFSGLTRDRHYGKGRIGERAFICVDTGGFEPVAKTGIVAEMAKQTKQAVAESDIVIFLVDGRLGMAPQDRVIADFLRKTGRPVILAVNKTEGMQSGIVTADFHELGLGEPFPISSAHGDGVKGLIDDALDSLGIAEPDEDELANDPNRPMKIAVVGRPNVGKSTLINKLIGEERVIAFDMPGTTRDAIEVPFERNGKPYILVDTAGLRRRGKVFEAIEKFSVVKTLQAIADCNVVILMLDAQQDISEQDAHIAGFIVEAGRALVVAVNKWDGLDAYVKERARLEIAQKLRFLDFANVHPISAKKGTGLKDLFKDVDAAYAAAMAKLPTPRLTRILQEAIEHQQPKRVGMGRPKLRYAHQGGMNPPIVVIHGTSLSGVTDSYKRYLEGRFRDVFKLRGTPLRIQMNTAKNPYVDADKGKKGKKH.

2 EngA-type G domains span residues 3–167 and 181–354; these read PVIT…GIAE and MKIA…AAAM. GTP-binding positions include 9–16, 56–60, 119–122, 187–194, 234–238, and 299–302; these read GRPNVGKS, DTGGF, NKTE, DTAGL, and NKWD. Positions 355–439 constitute a KH-like domain; that stretch reads AKLPTPRLTR…PLRIQMNTAK (85 aa).

It belongs to the TRAFAC class TrmE-Era-EngA-EngB-Septin-like GTPase superfamily. EngA (Der) GTPase family. As to quaternary structure, associates with the 50S ribosomal subunit.

Its function is as follows. GTPase that plays an essential role in the late steps of ribosome biogenesis. The sequence is that of GTPase Der from Polynucleobacter asymbioticus (strain DSM 18221 / CIP 109841 / QLW-P1DMWA-1) (Polynucleobacter necessarius subsp. asymbioticus).